A 65-amino-acid polypeptide reads, in one-letter code: Toxin NaTx-22 (65 aa).

The LCN-type CS-alpha/beta domain occupies Lys-1–Lys-64. 4 disulfides stabilise this stretch: Cys-12-Cys-63, Cys-16-Cys-39, Cys-25-Cys-44, and Cys-29-Cys-46.

It belongs to the long (4 C-C) scorpion toxin superfamily. Sodium channel inhibitor family. In terms of tissue distribution, expressed by the venom gland.

The protein resides in the secreted. Its function is as follows. Probable sodium channel inhibitor. The protein is Toxin NaTx-22 of Centruroides sculpturatus (Arizona bark scorpion).